A 378-amino-acid chain; its full sequence is MNNTEYYDRLGVSKDASQDDIKKAYRKMSKKYHPDINKEAGAEQKYKDVQEAYETLSDSQKRAAYDQYGAAGAQGGFGGGAGGFGGFDGGGFGGFEDIFSSFFGGGGSRNPNAPRQGDDLQYRVNLSFEEAVFGVEKEVSYNREATCGTCLGSGAKPGTAPVTCRKCHGSGVMTIDTQTPLGMMRRQVTCDICHGSGKEIKEPCQTCHGTGHEKQAHKVSVKIPAGVETGQQIRLQGQGEAGFNGGPYGDLFVILNVLPSKQFERNGSTIYYNLDISFTQAALGDTVEIPTVHGDVEMAIPAGTQTGKTFRLKGKGAPKLRGGGQGDQHVTVNIVTPTKLNDAQREALQAFAEASGEKMLHPKKKGFFDKVKDALEDI.

The region spanning 5–69 (EYYDRLGVSK…QKRAAYDQYG (65 aa)) is the J domain. The segment at 134-216 (GVEKEVSYNR…CHGTGHEKQA (83 aa)) adopts a CR-type zinc-finger fold. Zn(2+)-binding residues include C147, C150, C164, C167, C190, C193, C204, and C207. CXXCXGXG motif repeat units follow at residues 147–154 (CGTCLGSG), 164–171 (CRKCHGSG), 190–197 (CDICHGSG), and 204–211 (CQTCHGTG).

It belongs to the DnaJ family. Homodimer. Zn(2+) serves as cofactor.

It localises to the cytoplasm. In terms of biological role, participates actively in the response to hyperosmotic and heat shock by preventing the aggregation of stress-denatured proteins and by disaggregating proteins, also in an autonomous, DnaK-independent fashion. Unfolded proteins bind initially to DnaJ; upon interaction with the DnaJ-bound protein, DnaK hydrolyzes its bound ATP, resulting in the formation of a stable complex. GrpE releases ADP from DnaK; ATP binding to DnaK triggers the release of the substrate protein, thus completing the reaction cycle. Several rounds of ATP-dependent interactions between DnaJ, DnaK and GrpE are required for fully efficient folding. Also involved, together with DnaK and GrpE, in the DNA replication of plasmids through activation of initiation proteins. The chain is Chaperone protein DnaJ from Streptococcus pyogenes serotype M1.